The sequence spans 41 residues: Large ribosomal subunit protein bL36 (41 aa).

Belongs to the bacterial ribosomal protein bL36 family.

This is Large ribosomal subunit protein bL36 from Caulobacter vibrioides (strain ATCC 19089 / CIP 103742 / CB 15) (Caulobacter crescentus).